The following is a 127-amino-acid chain: UPF0389 protein GA21628 (127 aa).

The chain crosses the membrane as a helical span at residues 69–88 (IRLANIMIALTVIGCGIMVY).

The protein belongs to the UPF0389 family.

It localises to the membrane. This chain is UPF0389 protein GA21628, found in Drosophila pseudoobscura pseudoobscura (Fruit fly).